A 662-amino-acid chain; its full sequence is Polyunsaturated fatty acid lipoxygenase ALOX15 (662 aa).

Positions 2–114 constitute a PLAT domain; that stretch reads GLYRIRVSTG…VLSLPEGTGR (113 aa). The region spanning 115 to 662 is the Lipoxygenase domain; sequence TVGEDPQGLF…PSVVENSVAI (548 aa). His360, His365, His540, His544, and Ile662 together coordinate Fe cation.

The protein belongs to the lipoxygenase family. Interacts with PEBP1; in response to IL13/interleukin-13, prevents the interaction of PEBP1 with RAF1 to activate the ERK signaling cascade. Fe cation is required as a cofactor. Detected in monocytes and eosinophils (at protein level). Expressed in airway epithelial cells.

It localises to the cytoplasm. Its subcellular location is the cytosol. The protein localises to the cell membrane. The protein resides in the lipid droplet. The enzyme catalyses (5Z,8Z,11Z,14Z)-eicosatetraenoate + O2 = (12S)-hydroperoxy-(5Z,8Z,10E,14Z)-eicosatetraenoate. It carries out the reaction (5Z,8Z,11Z,14Z)-eicosatetraenoate + O2 = (15S)-hydroperoxy-(5Z,8Z,11Z,13E)-eicosatetraenoate. The catalysed reaction is (9Z,12Z)-octadecadienoate + O2 = (13S)-hydroperoxy-(9Z,11E)-octadecadienoate. It catalyses the reaction (5Z,8Z,11Z,14Z)-eicosatetraenoate + 2 O2 = (14R,15S)-dihydroperoxy-(5Z,8Z,10E,12E)-eicosatetraenoate. The enzyme catalyses (5Z,8Z,11Z,14Z)-eicosatetraenoate + 2 O2 = (8S,15S)-dihydroperoxy-(5Z,9E,11Z,13E)-eicosatetraenoate. It carries out the reaction (14S,15R)-epoxy-(5Z,8Z,11Z)-eicosatrienoate + O2 = (8S)-hydroperoxy-(14S,15R)-epoxy-(5Z,9E,11Z)-eicosatrienoate. The catalysed reaction is (14S,15R)-epoxy-(5Z,8Z,11Z)-eicosatrienoate + O2 = (12S)-hydroperoxy-(14S,15R)-epoxy-(5Z,8Z,10E)-eicosatrienoate. It catalyses the reaction (14R,15S)-epoxy-(5Z,8Z,11Z)-eicosatrienoate + O2 = (5S)-hydroperoxy-(14R,15S)-epoxy-(6E,8Z,11Z)-eicosatrienoate. The enzyme catalyses (14R,15S)-epoxy-(5Z,8Z,11Z)-eicosatrienoate + O2 = (12S)-hydroperoxy-(14R,15S)-epoxy-(5Z,8Z,10E)-eicosatrienoate. It carries out the reaction (15R)-hydroperoxy-(5Z,8Z,11Z,13E)-eicosatetraenoate = 15-oxo-(5Z,8Z,11Z,13E)-eicosatetraenoate + H2O. The catalysed reaction is (15S)-hydroperoxy-(5Z,8Z,11Z,13E)-eicosatetraenoate = (14S,15S)-epoxy-(5Z,8Z,10E,12E)-eicosatetraenoate + H2O. It catalyses the reaction (12S)-hydroperoxy-(5Z,8Z,10E,14Z)-eicosatetraenoate = (8S)-hydroxy-(11S,12S)-epoxy-(5Z,9E,14Z)-eicosatrienoate. The enzyme catalyses (4Z,7Z,10Z,13Z,16Z,19Z)-docosahexaenoate + O2 = (14S)-hydroperoxy-(4Z,7Z,10Z,12E,16Z,19Z)-docosahexaenoate. It carries out the reaction (4Z,7Z,10Z,13Z,16Z,19Z)-docosahexaenoate + O2 = (17S)-hydroperoxy-(4Z,7Z,10Z,13Z,15E,19Z)-docosahexaenoate. The catalysed reaction is (7S)-hydroperoxy-(4Z,8E,10Z,13Z,16Z,19Z)-docosahexaenoate + O2 = (7S,14S)-dihydroperoxy-(4Z,8E,10Z,12E,16Z,19Z)-docosahexaenoate. It catalyses the reaction (7S)-hydroperoxy-(4Z,8E,10Z,13Z,16Z,19Z)-docosahexaenoate + O2 = (7S,17S)-dihydroperoxy-(4Z,8E,10Z,13Z,15E,19Z)-docosahexaenoate. The enzyme catalyses (4Z,7Z,10Z,13Z,16Z,19Z)-docosahexaenoate + O2 = (11S)-hydroperoxy-(4Z,7Z,9E,13Z,16Z,19Z)-docosahexaenoate. It carries out the reaction (7Z,10Z,13Z,16Z,19Z)-docosapentaenoate + O2 = 14-hydroperoxy-(7Z,10Z,12E,16Z,19Z)-docosapentaenoate. The catalysed reaction is (4Z,7Z,10Z,13Z,16Z)-docosapentaenoate + O2 = 14-hydroperoxy-(4Z,7Z,10Z,12E,16Z)-docosapentaenoate. It catalyses the reaction N-(5Z,8Z,11Z,14Z)-eicosatetraenoyl-taurine + O2 = N-(12S)-hydroperoxy-(5Z,8Z,10E,14Z)-eicosatetraenoyl-taurine. The enzyme catalyses N-(5Z,8Z,11Z,14Z)-eicosatetraenoyl-gamma-aminobutanoate + O2 = N-(12S)-hydroperoxy-(5Z,8Z,10E,14Z)-eicosatetraenoyl-gamma-aminobutanoate. It carries out the reaction N-(5Z,8Z,11Z,14Z)-eicosatetraenoyl-glycine + O2 = N-(12S)-hydroperoxy-(5Z,8Z,10E,14Z)-eicosatetraenoyl-glycine. The catalysed reaction is N-(5Z,8Z,11Z,14Z)-eicosatetraenoyl-L-alanine + O2 = N-(12S)-hydroperoxy-(5Z,8Z,10E,14Z)-eicosatetraenoyl-alanine. It catalyses the reaction N-(5Z,8Z,11Z,14Z)-eicosatetraenoyl-taurine + O2 = N-(15S)-hydroperoxy-(5Z,8Z,11Z,13E)-eicosatetraenoyl-taurine. The enzyme catalyses N-(5Z,8Z,11Z,14Z)-eicosatetraenoyl-gamma-aminobutanoate + O2 = N-(15S)-hydroperoxy-(5Z,8Z,11Z,13E)-eicosatetraenoyl-gamma-aminobutanoate. It carries out the reaction N-(5Z,8Z,11Z,14Z)-eicosatetraenoyl-glycine + O2 = N-(15S)-hydroperoxy-(5Z,8Z,11Z,13E)-eicosatetraenoyl-glycine. The catalysed reaction is N-(5Z,8Z,11Z,14Z)-eicosatetraenoyl-L-alanine + O2 = N-(15S)-hydroperoxy-(5Z,8Z,11Z,13E)-eicosatetraenoyl-alanine. The protein operates within lipid metabolism; hydroperoxy eicosatetraenoic acid biosynthesis. Activity is increased by binding phosphatidylinositol phosphates, especially phosphatidylinositol 3,4-bisphosphate and phosphatidylinositol 4,5-bisphosphate. Inactivated at 37 degrees Celsius by (13S)-hydroperoxy-(9Z,11E)-octadecadienoate. Its function is as follows. Non-heme iron-containing dioxygenase that catalyzes the stereo-specific peroxidation of free and esterified polyunsaturated fatty acids generating a spectrum of bioactive lipid mediators. It inserts peroxyl groups at C12 or C15 of arachidonate ((5Z,8Z,11Z,14Z)-eicosatetraenoate) producing both 12-hydroperoxyeicosatetraenoate/12-HPETE and 15-hydroperoxyeicosatetraenoate/15-HPETE. It may then act on 12-HPETE to produce hepoxilins, which may show pro-inflammatory properties. Can also peroxidize linoleate ((9Z,12Z)-octadecadienoate) to 13-hydroperoxyoctadecadienoate/13-HPODE. May participate in the sequential oxidations of DHA ((4Z,7Z,10Z,13Z,16Z,19Z)-docosahexaenoate) to generate specialized pro-resolving mediators (SPMs)like resolvin D5 ((7S,17S)-diHPDHA) and (7S,14S)-diHPDHA, that actively down-regulate the immune response and have anti-aggregation properties with platelets. Can convert epoxy fatty acids to hydroperoxy-epoxides derivatives followed by an intramolecular nucleophilic substitution leading to the formation of monocyclic endoperoxides. Plays an important role during the maintenance of self-tolerance by peroxidizing membrane-bound phosphatidylethanolamine which can then signal the sorting process for clearance of apoptotic cells during inflammation and prevent an autoimmune response. In addition to its role in the immune and inflammatory responses, this enzyme may play a role in epithelial wound healing in the cornea through production of lipoxin A4 (LXA(4)) and docosahexaenoic acid-derived neuroprotectin D1 (NPD1; 10R,17S-HDHA), both lipid autacoids exhibit anti-inflammatory and neuroprotective properties. Furthermore, it may regulate actin polymerization which is crucial for several biological processes such as the phagocytosis of apoptotic cells. It is also implicated in the generation of endogenous ligands for peroxisome proliferator activated receptor (PPAR-gamma), hence modulating macrophage development and function. It may also exert a negative effect on skeletal development by regulating bone mass through this pathway. As well as participates in ER stress and downstream inflammation in adipocytes, pancreatic islets, and liver. Finally, it is also involved in the cellular response to IL13/interleukin-13. The polypeptide is Polyunsaturated fatty acid lipoxygenase ALOX15 (Homo sapiens (Human)).